The chain runs to 428 residues: Histidine--tRNA ligase (428 aa).

It belongs to the class-II aminoacyl-tRNA synthetase family. Homodimer.

Its subcellular location is the cytoplasm. It carries out the reaction tRNA(His) + L-histidine + ATP = L-histidyl-tRNA(His) + AMP + diphosphate + H(+). The sequence is that of Histidine--tRNA ligase from Lactobacillus gasseri (strain ATCC 33323 / DSM 20243 / BCRC 14619 / CIP 102991 / JCM 1131 / KCTC 3163 / NCIMB 11718 / NCTC 13722 / AM63).